The chain runs to 319 residues: Coiled-coil domain-containing protein PF3D7_1144200 (319 aa).

A compositionally biased stretch (basic and acidic residues) spans 1–12 (MSEEHSNDHIED). 2 disordered regions span residues 1-43 (MSEE…SESS) and 112-158 (KLEK…NQHN). Over residues 16–26 (CSQNCDETNSP) the composition is skewed to polar residues. Basic and acidic residues-rich tracts occupy residues 27–36 (KNEKDEKDFK) and 112–131 (KLEK…KKVT). Coiled coils occupy residues 100-134 (DLAN…TNDS), 166-242 (ELNE…IKKN), and 281-310 (NSNC…LINI). Over residues 132 to 150 (NDSTNNKNKNNSVPFLNEN) the composition is skewed to low complexity.

This is Coiled-coil domain-containing protein PF3D7_1144200 from Plasmodium falciparum (isolate 3D7).